Consider the following 120-residue polypeptide: Holo-[acyl-carrier-protein] synthase (120 aa).

Residues D8 and E58 each coordinate Mg(2+).

Belongs to the P-Pant transferase superfamily. AcpS family. Requires Mg(2+) as cofactor.

The protein resides in the cytoplasm. The catalysed reaction is apo-[ACP] + CoA = holo-[ACP] + adenosine 3',5'-bisphosphate + H(+). In terms of biological role, transfers the 4'-phosphopantetheine moiety from coenzyme A to a Ser of acyl-carrier-protein. The polypeptide is Holo-[acyl-carrier-protein] synthase (Limosilactobacillus reuteri (strain DSM 20016) (Lactobacillus reuteri)).